The primary structure comprises 256 residues: Stanniocalcin (256 aa).

The signal sequence occupies residues 1-18; sequence MLAKFGLCAVFLVLGTAA. A propeptide spanning residues 19-33 is cleaved from the precursor; the sequence is TFDTDPEEASPRRAR. An N-linked (GlcNAc...) asparagine glycan is attached at Asn-62. The segment at 204 to 241 is disordered; the sequence is QGSNQGPNSAPAGWRWPMGSPPSFKIQPSMRGRDPTHL.

It belongs to the stanniocalcin family. In terms of assembly, homodimer; disulfide-linked. As to expression, produced and secreted by the corpuscles of Stannius.

It localises to the secreted. In terms of biological role, its primary function is the prevention of hypercalcemia. Upon release into the circulation, it lowers calcium transport by the gills, thereby reducing its rate of influx from the environment into the extracellular compartment. STC also stimulates phosphate reabsorption by renal proximal tubules. The consequence of this action is increased levels of plasma phosphate, which combines with excess calcium and promotes its disposal into bone and scales. This Oncorhynchus mykiss (Rainbow trout) protein is Stanniocalcin (stc).